Reading from the N-terminus, the 287-residue chain is 4-diphosphocytidyl-2-C-methyl-D-erythritol kinase (287 aa).

Residue Lys12 is part of the active site. 97–107 contributes to the ATP binding site; that stretch reads PMGGGLGGGSS. Asp139 is an active-site residue.

The protein belongs to the GHMP kinase family. IspE subfamily.

It carries out the reaction 4-CDP-2-C-methyl-D-erythritol + ATP = 4-CDP-2-C-methyl-D-erythritol 2-phosphate + ADP + H(+). It participates in isoprenoid biosynthesis; isopentenyl diphosphate biosynthesis via DXP pathway; isopentenyl diphosphate from 1-deoxy-D-xylulose 5-phosphate: step 3/6. Functionally, catalyzes the phosphorylation of the position 2 hydroxy group of 4-diphosphocytidyl-2C-methyl-D-erythritol. This chain is 4-diphosphocytidyl-2-C-methyl-D-erythritol kinase, found in Marinobacter nauticus (strain ATCC 700491 / DSM 11845 / VT8) (Marinobacter aquaeolei).